Consider the following 98-residue polypeptide: NADH-ubiquinone oxidoreductase chain 4L (98 aa).

The next 3 membrane-spanning stretches (helical) occupy residues 1 to 21 (MSLV…GLLM), 29 to 49 (ALLC…LTIL), and 61 to 81 (IILL…LVTI).

The protein belongs to the complex I subunit 4L family. As to quaternary structure, core subunit of respiratory chain NADH dehydrogenase (Complex I) which is composed of 45 different subunits.

The protein resides in the mitochondrion inner membrane. The enzyme catalyses a ubiquinone + NADH + 5 H(+)(in) = a ubiquinol + NAD(+) + 4 H(+)(out). Its function is as follows. Core subunit of the mitochondrial membrane respiratory chain NADH dehydrogenase (Complex I) which catalyzes electron transfer from NADH through the respiratory chain, using ubiquinone as an electron acceptor. Part of the enzyme membrane arm which is embedded in the lipid bilayer and involved in proton translocation. This Ziphius cavirostris (Cuvier's beaked whale) protein is NADH-ubiquinone oxidoreductase chain 4L (MT-ND4L).